The following is a 729-amino-acid chain: Zorya protein ZorA (729 aa).

The next 3 membrane-spanning stretches (helical) occupy residues 20–40 (PATV…FYFF), 135–155 (LPGI…MIGL), and 177–197 (VLYA…ITWL).

It belongs to the MotA family.

It localises to the cell inner membrane. In terms of biological role, component of antiviral defense system Zorya type I, composed of ZorA, ZorB, ZorC and ZorD. Expression of Zorya type I in E.coli (strain MG1655) confers 10,000-fold resistance to phage SECphi27, 100-fold resistance to lambda, and 10-fold resistance to T7. While most T7 infected Zorya-containing cells undergo abortive infection, a minority produce viable phage progeny. These eventually accumulate to a high multiplicity of infection, leading to culture collapse by 2 hours after initial infection. ZorA and ZorB probably assemble in the cell inner membrane and exert their effect there. This is Zorya protein ZorA from Escherichia coli O139:H28 (strain E24377A / ETEC).